We begin with the raw amino-acid sequence, 534 residues long: C-type lectin domain family 18 member A (534 aa).

Positions 47 to 88 are disordered; it reads GALPVAGKPEPMARSLASAPVSPWHHMDRGSTTPAKARSHSA. One can recognise an SCP domain in the interval 139 to 270; the sequence is LTAHNRLRSR…EAMEAFVCAY (132 aa). Residues 316-349 form the EGF-like domain; it reads PRNPCRMSCRNLGHLNISTCRCHCQPGYTGRYCQ. Intrachain disulfides connect cysteine 324/cysteine 337, cysteine 339/cysteine 348, cysteine 415/cysteine 520, and cysteine 496/cysteine 512. The C-type lectin domain occupies 394 to 521; sequence IDGDCFMVSP…CKTRNRYICQ (128 aa).

The protein localises to the secreted. The polypeptide is C-type lectin domain family 18 member A (Clec18a) (Mus musculus (Mouse)).